The chain runs to 173 residues: NADH-quinone oxidoreductase subunit B (173 aa).

4 residues coordinate [4Fe-4S] cluster: C46, C47, C112, and C142.

This sequence belongs to the complex I 20 kDa subunit family. As to quaternary structure, NDH-1 is composed of 14 different subunits. Subunits NuoB, C, D, E, F, and G constitute the peripheral sector of the complex. Requires [4Fe-4S] cluster as cofactor.

The protein localises to the cell membrane. It catalyses the reaction a quinone + NADH + 5 H(+)(in) = a quinol + NAD(+) + 4 H(+)(out). In terms of biological role, NDH-1 shuttles electrons from NADH, via FMN and iron-sulfur (Fe-S) centers, to quinones in the respiratory chain. The immediate electron acceptor for the enzyme in this species is believed to be a menaquinone. Couples the redox reaction to proton translocation (for every two electrons transferred, four hydrogen ions are translocated across the cytoplasmic membrane), and thus conserves the redox energy in a proton gradient. The sequence is that of NADH-quinone oxidoreductase subunit B from Desulfitobacterium hafniense (strain DSM 10664 / DCB-2).